Here is a 565-residue protein sequence, read N- to C-terminus: MSQLRWWVVSQVLLLIAICSLDHSEGARVCPKIVPGLDKLRVGVDITKLDLLPLFDLGDNGFRSAVADYTCDRGQTAVVDGESFDVPDQVDSVVIESSGQQTSSVTTIKSESQISQALSISAGISVETAKAGFSSSASYAEMQEAITKYGRTVSQMSAVYTTCSANLSPNLLLGQNPLQTLSRLPSDFTADTQGYYDFIKTYGTHYFNKGKLGGMFLFTSETDMSYFQNKNSQQIEATVKATFASILSTETGGSSDESKEVIEFKESSLITSKFFGGQTNLAADGLTKWQPTIAKLPYFMSGTLSTISSLIADTTKRASMELAVKNYLLKAKVANLDRLTYIRLNSWSVGHNELRDLSAQLQNLKTKTIFSDADEKLLQSIEDQVSVPAWFSDRTTFCFRSTAVGSADQCNGQSTNTLCAEPNRYTQQYMDKTYLGDTGCRLVWKISTTESTDWFKSVKVNFRWYPTWSPCACGPVGTPFTISAPANSWTQDYLDVTNPKFGECMLQWMIEVPPTATLWAKNLEFCIDFTCGKKKQCVDANQWTEPYLDISAHEACGMSWALIAK.

Residues M1 to G26 form the signal peptide. Positions A27–T340 constitute an MACPF domain. The invertebrate MACPF Accessory Domain (IMAD) stretch occupies residues V387–K565.

As to quaternary structure, perivitellin-2 is a dimer of heterodimers held together head-to-tail by non-covalent forces. The heterodimer is composed of the tachylectin subunit (31 kDa) and the MACPF subunit (67 kDa) that are disulfide-linked. PV2 is a very high density lipoprotein (VHDL). It contains 3.75% of lipids. The major lipid classes are free sterols and phospholipids and also have significant quantities of energy-providing triacylglycerides and free fatty acids. In terms of tissue distribution, produced by albumen secretory cells. Found in developing eggs.

It localises to the secreted. Its subcellular location is the target cell membrane. Functionally, the egg defensive protein perivitellin-2 is a pore-forming two-subunit glycoprotein that affects both the nervous and digestive systems of mammals. In addition, it is a source of both structural and energetic molecules during embryonic development. The tachylectin subunit (31 kDa) binds target membranes while the MACPF subunit (67 kDa) disrupts lipid bilayers forming large pores (inner diameter of about 5.6 nm) altering the plasma membrance conductance. Both in vivo and in vitro, the protein shows wide pH range stability and is resistant to enzymatic proteolysis from gastrointestinal environments. It is cytotoxic to both epithelial and immune cells from the digestive system of mammals. It induces enterocyte death by a lytic mechanism and disrupts enterocyte monolayers in a dose-dependent manner. After oral administration to mice, it binds enterocytes and induces large dose-dependent morphological changes on their small intestine mucosa, reducing the absorptive surface. Additionally, it is detected in the Peyer's patches where it activates lymphoid follicles and triggers apoptosis. The toxin can also traverse the intestinal barrier and induce oral adaptive immunity with evidence of circulating antibody response. The toxin also shows hemagglutination properties thanks to the tachylectin subunit, but has no hemolytic activity. In addition to enterotoxin activity, the toxin also acts as a neurotoxin, since an intraperitoneal injection can induce paralysis of the mice rear limbs, followed by death. This chain is Perivitellin-2 67 kDa subunit, found in Pomacea maculata (Giant applesnail).